The following is a 614-amino-acid chain: 1-deoxy-D-xylulose-5-phosphate synthase (614 aa).

Thiamine diphosphate contacts are provided by residues H74 and 115-117; that span reads AHS. D146 serves as a coordination point for Mg(2+). Residues 147–148, N175, Y282, and E363 contribute to the thiamine diphosphate site; that span reads GA. N175 serves as a coordination point for Mg(2+).

The protein belongs to the transketolase family. DXPS subfamily. Homodimer. Requires Mg(2+) as cofactor. Thiamine diphosphate is required as a cofactor.

The catalysed reaction is D-glyceraldehyde 3-phosphate + pyruvate + H(+) = 1-deoxy-D-xylulose 5-phosphate + CO2. The protein operates within metabolic intermediate biosynthesis; 1-deoxy-D-xylulose 5-phosphate biosynthesis; 1-deoxy-D-xylulose 5-phosphate from D-glyceraldehyde 3-phosphate and pyruvate: step 1/1. Its function is as follows. Catalyzes the acyloin condensation reaction between C atoms 2 and 3 of pyruvate and glyceraldehyde 3-phosphate to yield 1-deoxy-D-xylulose-5-phosphate (DXP). The polypeptide is 1-deoxy-D-xylulose-5-phosphate synthase (Nitrosomonas eutropha (strain DSM 101675 / C91 / Nm57)).